The following is a 106-amino-acid chain: Large ribosomal subunit protein uL24 (106 aa).

It belongs to the universal ribosomal protein uL24 family. In terms of assembly, part of the 50S ribosomal subunit.

Its function is as follows. One of two assembly initiator proteins, it binds directly to the 5'-end of the 23S rRNA, where it nucleates assembly of the 50S subunit. In terms of biological role, one of the proteins that surrounds the polypeptide exit tunnel on the outside of the subunit. The protein is Large ribosomal subunit protein uL24 of Blochmanniella pennsylvanica (strain BPEN).